Here is a 222-residue protein sequence, read N- to C-terminus: Small ribosomal subunit protein uS3 (222 aa).

Positions 38–106 (IRKFISEKLA…NVHINIVEIK (69 aa)) constitute a KH type-2 domain.

The protein belongs to the universal ribosomal protein uS3 family. Part of the 30S ribosomal subunit. Forms a tight complex with proteins S10 and S14.

Binds the lower part of the 30S subunit head. Binds mRNA in the 70S ribosome, positioning it for translation. The sequence is that of Small ribosomal subunit protein uS3 from Lactobacillus gasseri (strain ATCC 33323 / DSM 20243 / BCRC 14619 / CIP 102991 / JCM 1131 / KCTC 3163 / NCIMB 11718 / NCTC 13722 / AM63).